A 182-amino-acid chain; its full sequence is UPF0301 protein NGK_1355 (182 aa).

Belongs to the UPF0301 (AlgH) family.

This chain is UPF0301 protein NGK_1355, found in Neisseria gonorrhoeae (strain NCCP11945).